The following is a 124-amino-acid chain: Prefoldin subunit beta (124 aa).

Belongs to the prefoldin subunit beta family. Heterohexamer of two alpha and four beta subunits.

It localises to the cytoplasm. In terms of biological role, molecular chaperone capable of stabilizing a range of proteins. Seems to fulfill an ATP-independent, HSP70-like function in archaeal de novo protein folding. The protein is Prefoldin subunit beta (pfdB) of Thermoplasma volcanium (strain ATCC 51530 / DSM 4299 / JCM 9571 / NBRC 15438 / GSS1).